The sequence spans 379 residues: Alanine racemase (379 aa).

The Proton acceptor; specific for D-alanine role is filled by Lys40. Lys40 is subject to N6-(pyridoxal phosphate)lysine. A substrate-binding site is contributed by Arg138. Catalysis depends on Tyr267, which acts as the Proton acceptor; specific for L-alanine. Met315 lines the substrate pocket.

This sequence belongs to the alanine racemase family. It depends on pyridoxal 5'-phosphate as a cofactor.

It catalyses the reaction L-alanine = D-alanine. Its pathway is amino-acid biosynthesis; D-alanine biosynthesis; D-alanine from L-alanine: step 1/1. In terms of biological role, catalyzes the interconversion of L-alanine and D-alanine. May also act on other amino acids. The polypeptide is Alanine racemase (alr) (Halothermothrix orenii (strain H 168 / OCM 544 / DSM 9562)).